Here is a 154-residue protein sequence, read N- to C-terminus: Transcriptional repressor NrdR (154 aa).

Residues 3–34 (CPFCGANDTKVIDSRLVAEGEQVRRRRECVAC) fold into a zinc finger. An ATP-cone domain is found at 49–139 (PRLIKQDGTR…VYRRFQDLDE (91 aa)).

This sequence belongs to the NrdR family. Requires Zn(2+) as cofactor.

Its function is as follows. Negatively regulates transcription of bacterial ribonucleotide reductase nrd genes and operons by binding to NrdR-boxes. The chain is Transcriptional repressor NrdR from Pseudomonas entomophila (strain L48).